Reading from the N-terminus, the 1209-residue chain is Neural cell adhesion molecule L1-like protein (1209 aa).

Positions M1–A25 are cleaved as a signal peptide. The Extracellular portion of the chain corresponds to E26–W1083. 2 Ig-like C2-type domains span residues P35 to E124 and P128 to T223. 2 disulfide bridges follow: C57/C109 and C153/C204. N87 carries an N-linked (GlcNAc...) asparagine glycan. N225 and N299 each carry an N-linked (GlcNAc...) asparagine glycan. Ig-like C2-type domains are found at residues P235–E328, P331–D417, P423–D510, and T515–T607. Disulfide bonds link C262–C310, C352–C401, C445–C494, and C536–C591. N476 carries N-linked (GlcNAc...) asparagine glycosylation. A DGEA motif is present at residues D555–A558. 2 N-linked (GlcNAc...) asparagine glycosylation sites follow: N562 and N580. 4 consecutive Fibronectin type-III domains span residues P614 to A709, N714 to D807, A812 to G914, and Q918 to G1015. The tract at residues H696 to N717 is disordered. Residues N767, N822, N945, and N1027 are each glycosylated (N-linked (GlcNAc...) asparagine). The helical transmembrane segment at F1084 to V1104 threads the bilayer. The Cytoplasmic segment spans residues K1105–A1209. A compositionally biased stretch (basic and acidic residues) spans K1115–T1133. Residues K1115–E1170 are disordered. Phosphoserine occurs at positions 1148, 1161, and 1181. Residues R1150–A1162 show a composition bias toward polar residues. An FIG[AQ]Y motif is present at residues F1182–Y1186.

This sequence belongs to the immunoglobulin superfamily. L1/neurofascin/NgCAM family. In terms of assembly, may interact with L1CAM. May interact with ITGB1/ITGA1 heterodimer and ITGB1/ITGA2 heterodimer as well as with ANK3. In terms of processing, cleavage by metalloprotease ADAM8 in the extracellular part generates 2 soluble forms (125 kDa and 165 kDa) in vitro and is inhibited by metalloprotease inhibitors. In brain extracts, these two soluble forms are also present and are dramatically reduced in mice lacking ADAM8. Cleaved by BACE1. N-glycosylated. Contains N-linked oligosaccharides with a sulfated carbohydrate structure type HNK-1 (SO4-3-GlcUABeta1,3GalBeta1,4GlcNAc). Post-translationally, O-glycosylated. In terms of tissue distribution, expressed in the brain, in the cerebellum and in the spinal cord. Detected in the retina and the optic nerve. Expressed in neurons and glial cells in the central nervous system and by Schwann cells in the peripheral nervous system.

The protein localises to the cell membrane. The protein resides in the secreted. Its subcellular location is the extracellular space. It localises to the extracellular matrix. Functionally, extracellular matrix and cell adhesion protein that plays a role in nervous system development and in synaptic plasticity. Both soluble and membranous forms promote neurite outgrowth of cerebellar and hippocampal neurons and suppress neuronal cell death. Plays a role in neuronal positioning of pyramidal neurons as well as in regulation of both the number of interneurons and the efficacy of GABAergic synapses. May play a role in regulating cell migration in nerve regeneration and cortical development. Potentiates integrin-dependent cell migration towards extracellular matrix proteins. Recruits ANK3 to the plasma membrane. This is Neural cell adhesion molecule L1-like protein (Chl1) from Mus musculus (Mouse).